Here is a 303-residue protein sequence, read N- to C-terminus: Putative S-adenosyl-L-methionine-dependent methyltransferase MAV_4435 (303 aa).

S-adenosyl-L-methionine-binding positions include D129 and 158 to 159 (DL).

This sequence belongs to the UPF0677 family.

Its function is as follows. Exhibits S-adenosyl-L-methionine-dependent methyltransferase activity. The sequence is that of Putative S-adenosyl-L-methionine-dependent methyltransferase MAV_4435 from Mycobacterium avium (strain 104).